The chain runs to 585 residues: Arginine--tRNA ligase (585 aa).

The short motif at 130–140 (ANPTGPMHVGH) is the 'HIGH' region element.

The protein belongs to the class-I aminoacyl-tRNA synthetase family. As to quaternary structure, monomer.

Its subcellular location is the cytoplasm. The catalysed reaction is tRNA(Arg) + L-arginine + ATP = L-arginyl-tRNA(Arg) + AMP + diphosphate. The protein is Arginine--tRNA ligase of Methylorubrum extorquens (strain CM4 / NCIMB 13688) (Methylobacterium extorquens).